Reading from the N-terminus, the 715-residue chain is Fatty acid oxidation complex subunit alpha (715 aa).

The tract at residues 1–190 is enoyl-CoA hydratase/isomerase; it reads MIYEGKAITV…KVGAVDAVVA (190 aa). Residue D297 participates in substrate binding. Residues 312–715 are 3-hydroxyacyl-CoA dehydrogenase; the sequence is RDVKQAAVLG…MAKNGQSFFG (404 aa). NAD(+) contacts are provided by residues M325, D344, 401-403, K408, and S430; that span reads VVE. H451 acts as the For 3-hydroxyacyl-CoA dehydrogenase activity in catalysis. Position 454 (N454) interacts with NAD(+). N501 and Y660 together coordinate substrate.

In the N-terminal section; belongs to the enoyl-CoA hydratase/isomerase family. It in the C-terminal section; belongs to the 3-hydroxyacyl-CoA dehydrogenase family. As to quaternary structure, heterotetramer of two alpha chains (FadB) and two beta chains (FadA).

It carries out the reaction a (3S)-3-hydroxyacyl-CoA + NAD(+) = a 3-oxoacyl-CoA + NADH + H(+). The enzyme catalyses a (3S)-3-hydroxyacyl-CoA = a (2E)-enoyl-CoA + H2O. It catalyses the reaction a 4-saturated-(3S)-3-hydroxyacyl-CoA = a (3E)-enoyl-CoA + H2O. The catalysed reaction is (3S)-3-hydroxybutanoyl-CoA = (3R)-3-hydroxybutanoyl-CoA. It carries out the reaction a (3Z)-enoyl-CoA = a 4-saturated (2E)-enoyl-CoA. The enzyme catalyses a (3E)-enoyl-CoA = a 4-saturated (2E)-enoyl-CoA. It functions in the pathway lipid metabolism; fatty acid beta-oxidation. Involved in the aerobic and anaerobic degradation of long-chain fatty acids via beta-oxidation cycle. Catalyzes the formation of 3-oxoacyl-CoA from enoyl-CoA via L-3-hydroxyacyl-CoA. It can also use D-3-hydroxyacyl-CoA and cis-3-enoyl-CoA as substrate. The sequence is that of Fatty acid oxidation complex subunit alpha from Pseudomonas fluorescens (strain SBW25).